The primary structure comprises 252 residues: Protein PYRAB15930 (252 aa).

It belongs to the CinA family.

In Pyrococcus abyssi (strain GE5 / Orsay), this protein is Protein PYRAB15930.